The primary structure comprises 207 residues: Probable nicotinate-nucleotide adenylyltransferase (207 aa).

It belongs to the NadD family.

The enzyme catalyses nicotinate beta-D-ribonucleotide + ATP + H(+) = deamido-NAD(+) + diphosphate. The protein operates within cofactor biosynthesis; NAD(+) biosynthesis; deamido-NAD(+) from nicotinate D-ribonucleotide: step 1/1. Its function is as follows. Catalyzes the reversible adenylation of nicotinate mononucleotide (NaMN) to nicotinic acid adenine dinucleotide (NaAD). The chain is Probable nicotinate-nucleotide adenylyltransferase from Desulfitobacterium hafniense (strain Y51).